A 242-amino-acid polypeptide reads, in one-letter code: uncharacterized protein (242 aa).

Disordered stretches follow at residues 43 to 70 (SRRS…TSKD) and 112 to 162 (RMSR…VTPR). Polar residues predominate over residues 58-70 (QSVSGRKNSTSKD). Low complexity-rich tracts occupy residues 122–139 (ERAA…AGHA) and 147–162 (ADGA…VTPR).

This is an uncharacterized protein from Homo sapiens (Human).